A 1172-amino-acid chain; its full sequence is Laminin subunit beta-3 (1172 aa).

The signal sequence occupies residues 1-17 (MRPFFLLCFALPGLLHA). The region spanning 22-249 (SRGACYPPVG…AVSQLRLQGS (228 aa)) is the Laminin N-terminal domain. N-linked (GlcNAc...) asparagine glycosylation is present at N220. Cystine bridges form between C250-C259, C252-C279, C281-C290, C293-C313, C316-C325, C318-C343, C346-C355, C358-C376, C379-C392, C381-C399, C401-C410, C413-C428, C431-C444, C433-C451, C453-C462, C465-C478, C481-C493, C483-C500, C502-C511, C519-C531, C534-C546, C536-C553, C555-C564, and C567-C578. Laminin EGF-like domains lie at 250-315 (CFCH…ECQR), 316-378 (CDCN…TCIS), 379-430 (CECD…GCHR), 431-480 (CDCN…GCEP), 481-533 (CACD…GCRA), and 534-580 (CDCD…VCVA). The domain II stretch occupies residues 579-785 (VACHPCFQTY…SLPDLTPTFN (207 aa)). N-linked (GlcNAc...) asparagine glycosylation occurs at N604. Residues 723–757 (EQSAQAAQQVSDSSRLLDQLRDSRREAERLVRQAG) are a coiled coil. The domain alpha stretch occupies residues 786-816 (KLCGNSRQMACTPISCPGELCPQDNGTACGS). N810 is a glycosylation site (N-linked (GlcNAc...) asparagine). Positions 817-1170 (RCRGVLPRAG…INGRVLYYAT (354 aa)) are domain I. Coiled coils occupy residues 831-884 (MAGQ…MEED) and 948-1133 (VLSQ…ELEL).

In terms of assembly, laminin is a complex glycoprotein, consisting of three different polypeptide chains (alpha, beta, gamma), which are bound to each other by disulfide bonds into a cross-shaped molecule comprising one long and three short arms with globules at each end. Beta-3 is a subunit of laminin-5 (laminin-332 or epiligrin/kalinin/nicein). Interacts with ECM1. As to expression, found in the basement membranes (major component).

It localises to the secreted. The protein localises to the extracellular space. Its subcellular location is the extracellular matrix. It is found in the basement membrane. In terms of biological role, binding to cells via a high affinity receptor, laminin is thought to mediate the attachment, migration and organization of cells into tissues during embryonic development by interacting with other extracellular matrix components. The polypeptide is Laminin subunit beta-3 (LAMB3) (Homo sapiens (Human)).